Reading from the N-terminus, the 95-residue chain is Aspartyl/glutamyl-tRNA(Asn/Gln) amidotransferase subunit C (95 aa).

Belongs to the GatC family. As to quaternary structure, heterotrimer of A, B and C subunits.

It carries out the reaction L-glutamyl-tRNA(Gln) + L-glutamine + ATP + H2O = L-glutaminyl-tRNA(Gln) + L-glutamate + ADP + phosphate + H(+). The enzyme catalyses L-aspartyl-tRNA(Asn) + L-glutamine + ATP + H2O = L-asparaginyl-tRNA(Asn) + L-glutamate + ADP + phosphate + 2 H(+). In terms of biological role, allows the formation of correctly charged Asn-tRNA(Asn) or Gln-tRNA(Gln) through the transamidation of misacylated Asp-tRNA(Asn) or Glu-tRNA(Gln) in organisms which lack either or both of asparaginyl-tRNA or glutaminyl-tRNA synthetases. The reaction takes place in the presence of glutamine and ATP through an activated phospho-Asp-tRNA(Asn) or phospho-Glu-tRNA(Gln). This chain is Aspartyl/glutamyl-tRNA(Asn/Gln) amidotransferase subunit C, found in Methylococcus capsulatus (strain ATCC 33009 / NCIMB 11132 / Bath).